A 401-amino-acid polypeptide reads, in one-letter code: (1R,4R,5S)-(-)-guaia-6,10(14)-diene synthase (401 aa).

The disordered stretch occupies residues 1 to 21 (MVKFDSGSESEMTNGDDLHIN). Positions 134 and 139 each coordinate Mg(2+). Residues 134-138 (DDQFD) carry the DDXXD motif motif. Position 242 (R242) interacts with substrate. Residues N288 and S292 each coordinate Mg(2+). Position 295 (K295) interacts with substrate. A Mg(2+)-binding site is contributed by D296. A substrate-binding site is contributed by 375–376 (RY).

The protein belongs to the terpene synthase family. Mg(2+) serves as cofactor.

It catalyses the reaction (2E,6E)-farnesyl diphosphate = (1R,4R,5S)-(-)-guaia-6,10(14)-diene + diphosphate. It participates in secondary metabolite biosynthesis; terpenoid biosynthesis. Catalyzes the conversion of (2E,6E)-farnesyl diphosphate (FPP) to yield the bicyclic sesquiterpene guaia-6,10(14)-diene via a 1,10-cyclization, which requires the abstraction of the pyrophosphate from FPP to yield the (E,E)-germacradienyl cation. The only accepted substrate is farnesyl diphosphate (FPP). The chain is (1R,4R,5S)-(-)-guaia-6,10(14)-diene synthase from Fusarium proliferatum (strain ET1) (Orchid endophyte fungus).